The following is a 165-amino-acid chain: Basic leucine zipper 43 (165 aa).

The bZIP domain maps to 70–133; that stretch reads NERKQKRKIS…EKVIEENVQL (64 aa). A basic motif region spans residues 72 to 93; the sequence is RKQKRKISNRESARRSRMRKQR. The tract at residues 98–112 is leucine-zipper; it reads LWSQVMWLRDENHQL.

As to quaternary structure, forms heterodimers with BZIP34 and BZIP61.

Its subcellular location is the nucleus. In terms of biological role, probable transcription factor involved in somatic embryogenesis. Acts as a positive regulator of BHLH109. The chain is Basic leucine zipper 43 from Arabidopsis thaliana (Mouse-ear cress).